A 214-amino-acid chain; its full sequence is Adenylate kinase (214 aa).

10–15 (GAGKGT) lines the ATP pocket. The NMP stretch occupies residues 30–59 (STGDMLRGAIKAGTDLGKQAKTLMDAGQLV). Residues threonine 31, arginine 36, 57-59 (QLV), 85-88 (GFPR), and glutamine 92 each bind AMP. Positions 122-159 (GRRVHQASGRTYHVVYNPPKVEGKDDVTGEDLIIRADD) are LID. Residues arginine 123 and 132-133 (TY) each bind ATP. AMP is bound by residues arginine 156 and arginine 167. An ATP-binding site is contributed by lysine 200.

The protein belongs to the adenylate kinase family. Monomer.

It is found in the cytoplasm. It carries out the reaction AMP + ATP = 2 ADP. It participates in purine metabolism; AMP biosynthesis via salvage pathway; AMP from ADP: step 1/1. In terms of biological role, catalyzes the reversible transfer of the terminal phosphate group between ATP and AMP. Plays an important role in cellular energy homeostasis and in adenine nucleotide metabolism. The sequence is that of Adenylate kinase from Pasteurella multocida (strain Pm70).